A 480-amino-acid chain; its full sequence is Transposase for transposon Tn552 (480 aa).

The H-T-H motif DNA-binding region spans 36-55; that stretch reads LSSISKSKGIALSTLYRWNK. The Integrase catalytic domain maps to 155–341; it reads ESSRPNEIWQ…TPINRWNSNH (187 aa). Residues 438–480 form a disordered region; the sequence is RKHLKQNIASPSTTDLIKEEKSYGYSPQETTKNVKKLKRYRND. Residues 470–480 show a composition bias toward basic residues; the sequence is NVKKLKRYRND.

The protein is Transposase for transposon Tn552 of Staphylococcus aureus.